The sequence spans 101 residues: uncharacterized protein (101 aa).

This is an uncharacterized protein from Shigella flexneri.